The chain runs to 242 residues: Glucosamine-6-phosphate deaminase (242 aa).

D67 functions as the Proton acceptor; for enolization step in the catalytic mechanism. Residue N137 is the For ring-opening step of the active site. The Proton acceptor; for ring-opening step role is filled by H139. E144 acts as the For ring-opening step in catalysis.

It belongs to the glucosamine/galactosamine-6-phosphate isomerase family. NagB subfamily.

It catalyses the reaction alpha-D-glucosamine 6-phosphate + H2O = beta-D-fructose 6-phosphate + NH4(+). Its pathway is amino-sugar metabolism; N-acetylneuraminate degradation; D-fructose 6-phosphate from N-acetylneuraminate: step 5/5. In terms of biological role, catalyzes the reversible isomerization-deamination of glucosamine 6-phosphate (GlcN6P) to form fructose 6-phosphate (Fru6P) and ammonium ion. The protein is Glucosamine-6-phosphate deaminase of Staphylococcus saprophyticus subsp. saprophyticus (strain ATCC 15305 / DSM 20229 / NCIMB 8711 / NCTC 7292 / S-41).